The sequence spans 495 residues: Trigger factor (495 aa).

In terms of domain architecture, PPIase FKBP-type spans 169–254 (GDRVTIDYLG…VKEVAAPGEV (86 aa)). The tract at residues 439-495 (ALLADDESEDKPAAKKAAPKKKAAKAEATEAAAEGEEAAVPKKKAAPKKKAAEDSAE) is disordered.

It belongs to the FKBP-type PPIase family. Tig subfamily.

It localises to the cytoplasm. It carries out the reaction [protein]-peptidylproline (omega=180) = [protein]-peptidylproline (omega=0). Its function is as follows. Involved in protein export. Acts as a chaperone by maintaining the newly synthesized protein in an open conformation. Functions as a peptidyl-prolyl cis-trans isomerase. The chain is Trigger factor from Rhizobium rhizogenes (strain K84 / ATCC BAA-868) (Agrobacterium radiobacter).